The sequence spans 1136 residues: Tyrosine-protein kinase receptor Tie-1 (1136 aa).

An N-terminal signal peptide occupies residues M1–V23. The Extracellular portion of the chain corresponds to D24 to Q757. One can recognise an Ig-like C2-type 1 domain in the interval C43–C106. N-linked (GlcNAc...) asparagine glycosylation is found at N84 and N159. EGF-like domains lie at G212–E254, A256–Q301, and A303–E343. 3 cysteine pairs are disulfide-bonded: C226-C235, C229-C242, and C244-C253. Disulfide bonds link C317/C325, C319/C331, and C333/C342. The 55-residue stretch at C370–C424 folds into the Ig-like C2-type 2 domain. 3 consecutive Fibronectin type-III domains span residues P444–P543, K546–S640, and A644–N737. Residues N501, N594, and N707 are each glycosylated (N-linked (GlcNAc...) asparagine). A helical membrane pass occupies residues Q758 to A782. Over C783–A1136 the chain is Cytoplasmic. The Protein kinase domain occupies I837–V1116. Residues I843–V851 and K868 each bind ATP. D977 (proton acceptor) is an active-site residue. A Phosphotyrosine; by autocatalysis modification is found at Y1005.

The protein belongs to the protein kinase superfamily. Tyr protein kinase family. Tie subfamily. Heterodimer with TEK/TIE2. Interacts with SVEP1 (via C-terminus). Phosphorylated on tyrosine residues in response to ANGPT1, most likely by TEK/TIE2. In terms of tissue distribution, specifically expressed in developing vascular endothelial cells.

It is found in the cell membrane. It carries out the reaction L-tyrosyl-[protein] + ATP = O-phospho-L-tyrosyl-[protein] + ADP + H(+). Functionally, transmembrane tyrosine-protein kinase that may modulate TEK/TIE2 activity and contribute to the regulation of angiogenesis. This chain is Tyrosine-protein kinase receptor Tie-1 (TIE1), found in Bos taurus (Bovine).